We begin with the raw amino-acid sequence, 164 residues long: Thiol peroxidase (164 aa).

In terms of domain architecture, Thioredoxin spans 18–163 (INEGDFAPDF…FDAALAAYKN (146 aa)). Cys-60 acts as the Cysteine sulfenic acid (-SOH) intermediate in catalysis. Cys-60 and Cys-93 are disulfide-bonded.

It belongs to the peroxiredoxin family. Tpx subfamily. In terms of assembly, homodimer.

It carries out the reaction a hydroperoxide + [thioredoxin]-dithiol = an alcohol + [thioredoxin]-disulfide + H2O. In terms of biological role, thiol-specific peroxidase that catalyzes the reduction of hydrogen peroxide and organic hydroperoxides to water and alcohols, respectively. Plays a role in cell protection against oxidative stress by detoxifying peroxides. The chain is Thiol peroxidase from Staphylococcus aureus (strain COL).